We begin with the raw amino-acid sequence, 422 residues long: UDP-N-acetylglucosamine 1-carboxyvinyltransferase (422 aa).

22-23 (KN) contacts phosphoenolpyruvate. Arginine 93 provides a ligand contact to UDP-N-acetyl-alpha-D-glucosamine. The active-site Proton donor is the cysteine 117. Cysteine 117 is modified (2-(S-cysteinyl)pyruvic acid O-phosphothioketal). UDP-N-acetyl-alpha-D-glucosamine is bound by residues 122-126 (RPVDQ), aspartate 305, and isoleucine 327.

This sequence belongs to the EPSP synthase family. MurA subfamily.

The protein resides in the cytoplasm. It catalyses the reaction phosphoenolpyruvate + UDP-N-acetyl-alpha-D-glucosamine = UDP-N-acetyl-3-O-(1-carboxyvinyl)-alpha-D-glucosamine + phosphate. Its pathway is cell wall biogenesis; peptidoglycan biosynthesis. In terms of biological role, cell wall formation. Adds enolpyruvyl to UDP-N-acetylglucosamine. The chain is UDP-N-acetylglucosamine 1-carboxyvinyltransferase from Bordetella petrii (strain ATCC BAA-461 / DSM 12804 / CCUG 43448).